The sequence spans 102 residues: Small ribosomal subunit protein uS10 (102 aa).

It belongs to the universal ribosomal protein uS10 family. As to quaternary structure, part of the 30S ribosomal subunit.

In terms of biological role, involved in the binding of tRNA to the ribosomes. The protein is Small ribosomal subunit protein uS10 of Mycoplasma mycoides subsp. mycoides SC (strain CCUG 32753 / NCTC 10114 / PG1).